A 1131-amino-acid polypeptide reads, in one-letter code: DNA polymerase II large subunit (1131 aa).

The protein belongs to the archaeal DNA polymerase II family. Heterodimer of a large subunit and a small subunit.

It carries out the reaction DNA(n) + a 2'-deoxyribonucleoside 5'-triphosphate = DNA(n+1) + diphosphate. It catalyses the reaction Exonucleolytic cleavage in the 3'- to 5'-direction to yield nucleoside 5'-phosphates.. Its function is as follows. Possesses two activities: a DNA synthesis (polymerase) and an exonucleolytic activity that degrades single-stranded DNA in the 3'- to 5'-direction. Has a template-primer preference which is characteristic of a replicative DNA polymerase. The sequence is that of DNA polymerase II large subunit from Methanococcus maripaludis (strain DSM 14266 / JCM 13030 / NBRC 101832 / S2 / LL).